Reading from the N-terminus, the 305-residue chain is Putative E3 ubiquitin-protein ligase SINAT1 (305 aa).

The RING-type zinc-finger motif lies at C57 to R93. Residues V107–R300 form an SBD region. An SIAH-type zinc finger spans residues S110–K170. Residues C115, C122, H134, C138, C145, C152, H164, and H169 each coordinate Zn(2+).

It belongs to the SINA (Seven in absentia) family. Interacts with SINAT6. Interacts with ATG6 and TRAF1A. Interacts with WAV3. Interacts with FREE1. Interacts with ELC/VPS23A.

The protein localises to the endosome. It is found in the multivesicular body. The protein resides in the cytoplasmic vesicle. Its subcellular location is the autophagosome. The enzyme catalyses S-ubiquitinyl-[E2 ubiquitin-conjugating enzyme]-L-cysteine + [acceptor protein]-L-lysine = [E2 ubiquitin-conjugating enzyme]-L-cysteine + N(6)-ubiquitinyl-[acceptor protein]-L-lysine.. It participates in protein modification; protein ubiquitination. Functionally, E3 ubiquitin-protein ligase that mediates ubiquitination and subsequent proteasomal degradation of target proteins. E3 ubiquitin ligases accept ubiquitin from an E2 ubiquitin-conjugating enzyme in the form of a thioester and then directly transfers the ubiquitin to targeted substrates. It probably triggers the ubiquitin-mediated degradation of different substrates. Mediates the proteasomal-dependent degradation of ATG6, a component of the autophagosome complex. Requires TRAF1A/MUSE14 and TRAF1B/MUSE13 to target ATG6 for ubiquitination and subsequent regulation of autophagosome assembly. Modulates directly the ubiquitination and proteasomal-dependent degradation of FREE1, a component of the ESCRT-I complex. Modulates directly the ubiquitination and proteasomal-dependent degradation of ELC/VPS23A, a component of the ESCRT-I complex. This is Putative E3 ubiquitin-protein ligase SINAT1 from Arabidopsis thaliana (Mouse-ear cress).